We begin with the raw amino-acid sequence, 219 residues long: Maleylacetoacetate isomerase (219 aa).

The GST N-terminal domain occupies 4 to 87; it reads NKTVLYSYWR…YLEETHPENP (84 aa). Glutathione contacts are provided by residues 14 to 19, Gln-45, 71 to 72, Gln-111, and 115 to 117; these read SSCSWR, QS, and NLK. One can recognise a GST C-terminal domain in the interval 92–217; it reads GSYERAIARQ…LPQNQPDAEP (126 aa).

It belongs to the GST superfamily. Zeta family. The cofactor is glutathione.

It carries out the reaction 4-maleylacetoacetate = 4-fumarylacetoacetate. The protein operates within amino-acid degradation; L-phenylalanine degradation; acetoacetate and fumarate from L-phenylalanine: step 5/6. This chain is Maleylacetoacetate isomerase (mai), found in Dictyostelium discoideum (Social amoeba).